We begin with the raw amino-acid sequence, 294 residues long: Putative glutamine amidotransferase HI_1037 (294 aa).

C18 is a catalytic residue. The Glutamine amidotransferase type-2 domain occupies 18–266; that stretch reads CQLLGMNCNT…NGGFVFFKNG (249 aa).

This chain is Putative glutamine amidotransferase HI_1037, found in Haemophilus influenzae (strain ATCC 51907 / DSM 11121 / KW20 / Rd).